The primary structure comprises 34 residues: Leader peptide SpeFL (34 aa).

The Ornithine recognition loop signature appears at 10-16 (HIRRTTH). Position 13 (Arg13) interacts with L-ornithine.

It belongs to the speF operon leader peptide family. Binds ornithine in stalled 70S ribosomes, blocking the upper two-thirds of the exit tunnel. Contacts 23S rRNA and ribosomal proteins L4 and L22.

Its function is as follows. A small protein (arrest peptide) encoded upstream of inducible ornithine carboxylase gene (speF) that controls expression of downstream genes (speF and potE) by transcriptional and translational attenuation. Its expression controls transcription and translation of downstream SpeF; translation pausing at low Arg levels on this mRNA prevents premature Rho-dependent transcription termination of speF and also enhances SprF translation by preventing sequestration of its ribosome-binding site. In the presence of high Arg levels translation of this protein allows the formation of an speF mRNA structure that is degraded by RNase G. This Salmonella typhimurium (strain SL1344) protein is Leader peptide SpeFL.